The primary structure comprises 709 residues: Polyribonucleotide nucleotidyltransferase (709 aa).

Asp482 and Asp488 together coordinate Mg(2+). The KH domain maps to Pro549–Ile608. The 69-residue stretch at Gly618–Lys686 folds into the S1 motif domain.

Belongs to the polyribonucleotide nucleotidyltransferase family. The cofactor is Mg(2+).

The protein resides in the cytoplasm. The enzyme catalyses RNA(n+1) + phosphate = RNA(n) + a ribonucleoside 5'-diphosphate. Involved in mRNA degradation. Catalyzes the phosphorolysis of single-stranded polyribonucleotides processively in the 3'- to 5'-direction. This is Polyribonucleotide nucleotidyltransferase from Heliobacterium modesticaldum (strain ATCC 51547 / Ice1).